The following is a 95-amino-acid chain: MKVLSISLIFFALLLTGCSQVEKIAPDNFNKIFEEGKQFVENTQTEIEDIDIEQLIEKAKELGFNTEILTALYDELKRIHSIRKLSNCSNSMLLP.

Positions 1–21 are cleaved as a signal peptide; it reads MKVLSISLIFFALLLTGCSQV.

This is an uncharacterized protein from Archaeoglobus fulgidus (strain ATCC 49558 / DSM 4304 / JCM 9628 / NBRC 100126 / VC-16).